The following is a 161-amino-acid chain: Epithelial membrane protein 2 (161 aa).

The next 4 membrane-spanning stretches (helical) occupy residues 1 to 21, 67 to 87, 95 to 115, and 137 to 157; these read MLVILAFIILFHITSAILLFI, TMILATILCCVGFFVFILQLF, FVFTAIIQLLSAFCVMTGASI, and FVVAWVAFPMTLLSGLMYLVL.

This sequence belongs to the PMP-22/EMP/MP20 family. In terms of tissue distribution, expressed in the arches, orbits, pectoral fins, vessels, pronephric renal tubules, and glomeruli.

It localises to the golgi apparatus membrane. It is found in the cell membrane. The protein localises to the apical cell membrane. Its subcellular location is the membrane raft. The protein resides in the cytoplasm. It localises to the nucleus. It is found in the perinuclear region. Functionally, functions as a key regulator of cell membrane composition by regulating protein surface expression. Also, plays a role in regulation of processes including cell migration, cell proliferation, cell contraction and cell adhesion. May play a role in glomerular filtration. This chain is Epithelial membrane protein 2 (emp2), found in Danio rerio (Zebrafish).